The primary structure comprises 447 residues: BAG family molecular chaperone regulator 5 (447 aa).

BAG domains lie at 9–86, 95–167, 182–260, 275–350, and 365–442; these read SISR…EQNA, QNIF…EDCM, SVAK…DLEE, SIIK…DLKE, and PHKA…DMKS.

In terms of assembly, binds to the ATPase domain of HSP/HSP70 chaperones. Binds PRKN. Interacts with HSPA8. Interacts with JPH2.

Co-chaperone for HSP/HSP70 proteins. It functions as a nucleotide-exchange factor promoting the release of ADP from HSP70, thereby activating HSP70-mediated protein refolding. Has an essential role in maintaining proteostasis at junctional membrane complexes (JMC), where it may function as a scaffold between the HSPA8 chaperone and JMC proteins enabling correct, HSPA8-dependent JMC protein folding. Inhibits both auto-ubiquitination of PRKN and ubiquitination of target proteins by PRKN. The chain is BAG family molecular chaperone regulator 5 (Bag5) from Mus musculus (Mouse).